The sequence spans 161 residues: Putative ecotin-like protein (161 aa).

The N-terminal stretch at 1–24 is a signal peptide; the sequence is MSLRPIETAIASLTMLMLQGCAHA.

The protein belongs to the protease inhibitor I11 (ecotin) family.

The chain is Putative ecotin-like protein from Methylobacillus flagellatus (strain ATCC 51484 / DSM 6875 / VKM B-1610 / KT).